The chain runs to 827 residues: Cell surface glycoprotein (827 aa).

The signal sequence occupies residues Met1 to Ala34. Residue Asn47 is glycosylated (N-linked (Glc...) asparagine). Residues Pro73–Leu102 show a composition bias toward polar residues. A disordered region spans residues Pro73–Gly111. N-linked (Glc...) asparagine glycans are attached at residues Asn117, Asn308, Asn313, Asn532, and Asn766. The segment at Ser755–Pro804 is disordered. The segment covering Thr761–Thr787 has biased composition (low complexity). Positions Pro804 to Phe806 match the PGF sorting signal motif. The chain crosses the membrane as a helical span at residues Pro804–Leu823.

This sequence belongs to the halobacterial S-layer protein family. Post-translationally, O-glycosylated on 4 to 6 threonine residues; glycans consist of Glc-Gal disaccharides. The N-terminus is not blocked. In terms of processing, cleaved by the archaeosortase ArtA at the C-terminus, with removal of a short hydrophobic segment. Post-translationally, lipidation: Following protein translocation across the membrane, the protein is modified by a derivative of mevalonic acid. Lipid modification is ArtA-dependent and requires the conserved C-terminal PGF motif. Asn-47 and Asn-117 are glycosylated by a pentasaccharide comprising a hexose, 2 hexuronic acids, a methyl ester of a hexuronic acid and mannose. The pentasaccharide is produced in 2 steps: first, a tetrasaccharide is built on dolichol-P and then transferred to the S-layer glycoprotein. Then, the mannose fifth sugar is attached to a distinct molecule of dolichol-P and is transferred to the protein already carrying the tetrasaccharide. The pentasaccharide on Asn-47 was initially thought to contain mannose, galactose, glucose and idose with a relative ratio of 1/3/3/0.2. However, it was later shown that it is not the case. Under low-salt conditions (1.75 M instead of 3.4 M), a tetrasaccharide consisting of a sulfated hexose, 2 hexoses and rhamnose is attached to Asn-532.

It is found in the secreted. Its subcellular location is the cell wall. The protein resides in the S-layer. It localises to the cell membrane. Its function is as follows. S-layer protein. The S-layer is a paracrystalline mono-layered assembly of proteins which coat the surface of the cell. In Haloferax volcanii (strain ATCC 29605 / DSM 3757 / JCM 8879 / NBRC 14742 / NCIMB 2012 / VKM B-1768 / DS2) (Halobacterium volcanii), this protein is Cell surface glycoprotein (csg).